Reading from the N-terminus, the 344-residue chain is L-rhamnose-proton symporter (344 aa).

Transmembrane regions (helical) follow at residues A4–A24, W38–L58, F68–I88, M101–L121, T137–L157, L175–A195, I207–I227, I259–G279, M290–L310, and V321–G341.

Belongs to the L-rhamnose transporter (TC 2.A.7.6) family.

It is found in the cell inner membrane. The catalysed reaction is L-rhamnopyranose(in) + H(+)(in) = L-rhamnopyranose(out) + H(+)(out). Uptake of L-rhamnose across the cytoplasmic membrane with the concomitant transport of protons into the cell (symport system). This chain is L-rhamnose-proton symporter, found in Yersinia pseudotuberculosis serotype O:1b (strain IP 31758).